Consider the following 259-residue polypeptide: Insulin-induced gene 1 protein (259 aa).

Topologically, residues 1–66 (MPRLHDHVWN…ARPGSWHHDL (66 aa)) are cytoplasmic. Residues 36 to 55 (PGVPEPEHAPRGQRAGTTGC) are disordered. Residues 67-89 (VQRSLVLFSFGVVLALVLNLLQI) traverse the membrane as a helical segment. Topologically, residues 90–108 (QRNVTLFPDEVIATIFSSA) are extracellular. Residues 109–126 (WWVPPCCGTAAAVVGLLY) form a helical membrane-spanning segment. Topologically, residues 127–141 (PCIDSHLGEPHKFKR) are cytoplasmic. Glycyl lysine isopeptide (Lys-Gly) (interchain with G-Cter in ubiquitin) cross-links involve residues Lys-138 and Lys-140. Residues 142–164 (EWASVMRCIAVFVGINHASAKLD) traverse the membrane as a helical segment. At 165 to 167 (FAN) the chain is on the extracellular side. The helical transmembrane segment at 168 to 186 (NVQLSLTLAALSLGLWWTF) threads the bilayer. Residues 187–191 (DRSRS) lie on the Cytoplasmic side of the membrane. The residue at position 189 (Ser-189) is a Phosphoserine. Residues 192–213 (GLGLGITIAFLATLITQFLVYN) traverse the membrane as a helical segment. Over 214-227 (GVYQYTSPDFLYIR) the chain is Extracellular. The chain crosses the membrane as a helical span at residues 228-245 (SWLPCIFFSGGVTVGNIG). The Cytoplasmic segment spans residues 246–259 (RQLAMGVPEKPHSD). A KxHxx motif is present at residues 253–259 (PEKPHSD).

It belongs to the INSIG family. Interacts with SCAP; interaction is direct and only takes place in the presence of sterols; it prevents interaction between SCAP and the coat protein complex II (COPII). Associates with the SCAP-SREBP complex (composed of SCAP and SREBF1/SREBP1 or SREBF2/SREBP2); association is mediated via its interaction with SCAP and only takes place in the presence of sterols. Interaction with SCAP is mutually exclusive with PAQR3. Interacts with HMGCR (via its SSD); the interaction, accelerated by sterols, leads to the recruitment of HMGCR to AMFR/gp78 for its ubiquitination by the sterol-mediated ERAD pathway. Interacts with AMFR/gp78 (via its membrane domain); the interaction recruits HMCR at the ER membrane for its ubiquitination and degradation by the sterol-mediated ERAD pathway. Interacts with SOAT2/ACAT2; leading to promote recruitment of AMFR/gp78 and subsequent ubiquitination of SOAT2/ACAT2. Interacts with RNF139. Interacts with RNF145. Post-translationally, phosphorylation at Ser-189 by PCK1 reduces binding to oxysterol, disrupting the interaction between INSIG1 and SCAP, thereby promoting nuclear translocation of SREBP proteins (SREBF1/SREBP1 or SREBF2/SREBP2) and subsequent transcription of downstream lipogenesis-related genes. Ubiquitinated by AMFR/gp78 in response to sterol deprivation, leading to its degradation: when the SCAP-SREBP complex becomes dissociated from INSIG1, INSIG1 is then ubiquitinated and degraded in proteasomes. Although ubiquitination is required for rapid INSIG1 degradation, it is not required for release of the SCAP-SREBP complex. Ubiquitinated by RNF139.

It is found in the endoplasmic reticulum membrane. Its function is as follows. Oxysterol-binding protein that mediates feedback control of cholesterol synthesis by controlling both endoplasmic reticulum to Golgi transport of SCAP and degradation of HMGCR. Acts as a negative regulator of cholesterol biosynthesis by mediating the retention of the SCAP-SREBP complex in the endoplasmic reticulum, thereby blocking the processing of sterol regulatory element-binding proteins (SREBPs) SREBF1/SREBP1 and SREBF2/SREBP2. Binds oxysterol, including 25-hydroxycholesterol, regulating interaction with SCAP and retention of the SCAP-SREBP complex in the endoplasmic reticulum. In presence of oxysterol, interacts with SCAP, retaining the SCAP-SREBP complex in the endoplasmic reticulum, thereby preventing SCAP from escorting SREBF1/SREBP1 and SREBF2/SREBP2 to the Golgi. Sterol deprivation or phosphorylation by PCK1 reduce oxysterol-binding, disrupting the interaction between INSIG1 and SCAP, thereby promoting Golgi transport of the SCAP-SREBP complex, followed by processing and nuclear translocation of SREBF1/SREBP1 and SREBF2/SREBP2. Also regulates cholesterol synthesis by regulating degradation of HMGCR: initiates the sterol-mediated ubiquitin-mediated endoplasmic reticulum-associated degradation (ERAD) of HMGCR via recruitment of the reductase to the ubiquitin ligases AMFR/gp78 and/or RNF139. Also regulates degradation of SOAT2/ACAT2 when the lipid levels are low: initiates the ubiquitin-mediated degradation of SOAT2/ACAT2 via recruitment of the ubiquitin ligases AMFR/gp78. In Mus musculus (Mouse), this protein is Insulin-induced gene 1 protein.